The following is a 108-amino-acid chain: UPF0060 membrane protein YnfA (108 aa).

The Periplasmic portion of the chain corresponds to M1–T5. A helical transmembrane segment spans residues L6 to I26. Residues K27–A30 lie on the Cytoplasmic side of the membrane. The chain crosses the membrane as a helical span at residues S31–L51. Over H52–Y60 the chain is Periplasmic. Residues A61–V81 traverse the membrane as a helical segment. Over R82 to T84 the chain is Cytoplasmic. Residues V85–W105 traverse the membrane as a helical segment. At G106–T108 the chain is on the periplasmic side.

The protein belongs to the UPF0060 family.

The protein resides in the cell inner membrane. The polypeptide is UPF0060 membrane protein YnfA (Salmonella typhi).